The chain runs to 496 residues: Palmitoleoyl-protein carboxylesterase NOTUM (496 aa).

An N-terminal signal peptide occupies residues 1–19 (MGRGVRVLLLLSLLHCAGG). The disordered stretch occupies residues 21-46 (EGRKTWRRRGQQPPPPPRTEAAPAAG). Ser81 bears the Phosphoserine; by FAM20C mark. Asn96 carries N-linked (GlcNAc...) asparagine glycosylation. Active-site charge relay system residues include Ser232, Asp340, and His389.

This sequence belongs to the pectinacetylesterase family. Notum subfamily. In terms of tissue distribution, rarely expressed in adult normal tissues.

The protein resides in the secreted. It carries out the reaction [Wnt protein]-O-(9Z)-hexadecenoyl-L-serine + H2O = [Wnt protein]-L-serine + (9Z)-hexadecenoate + H(+). Functionally, carboxylesterase that acts as a key negative regulator of the Wnt signaling pathway by specifically mediating depalmitoleoylation of WNT proteins. Serine palmitoleoylation of WNT proteins is required for efficient binding to frizzled receptors. The polypeptide is Palmitoleoyl-protein carboxylesterase NOTUM (Homo sapiens (Human)).